Consider the following 419-residue polypeptide: tRNA(Met) cytidine acetate ligase (419 aa).

ATP-binding positions include 7–20, glycine 101, asparagine 163, and arginine 188; that span reads ITEYNPFHNGHLHH.

The protein belongs to the TmcAL family.

The protein localises to the cytoplasm. The enzyme catalyses cytidine(34) in elongator tRNA(Met) + acetate + ATP = N(4)-acetylcytidine(34) in elongator tRNA(Met) + AMP + diphosphate. Catalyzes the formation of N(4)-acetylcytidine (ac(4)C) at the wobble position of elongator tRNA(Met), using acetate and ATP as substrates. First activates an acetate ion to form acetyladenylate (Ac-AMP) and then transfers the acetyl group to tRNA to form ac(4)C34. This Syntrophotalea carbinolica (strain DSM 2380 / NBRC 103641 / GraBd1) (Pelobacter carbinolicus) protein is tRNA(Met) cytidine acetate ligase.